The sequence spans 236 residues: Ascorbate-specific transmembrane electron transporter 1 (236 aa).

Residues 1 to 11 (MGLGLGVRAAP) are Cytoplasmic-facing. A helical transmembrane segment spans residues 12-32 (FTYAAHALAVAAAAMVLVWSI). One can recognise a Cytochrome b561 domain in the interval 15–219 (AAHALAVAAA…FGASVVVAAI (205 aa)). Over 33-50 (QFRGGLAIESTNKNLIFN) the chain is Extracellular. The helical transmembrane segment at 51–71 (VHPVLMLIGYVIIGGEAIMVY) threads the bilayer. A heme b-binding site is contributed by His52. An L-ascorbate-binding site is contributed by 67–75 (AIMVYRVLP). The Cytoplasmic segment spans residues 72–84 (RVLPTSNHDTTKL). The chain crosses the membrane as a helical span at residues 85-105 (IHLILHGIALVLGAVGIYFAF). Heme b-binding residues include His86 and His120. Over 106-122 (KNHNESGIANLYSLHSW) the chain is Extracellular. 116–125 (LYSLHSWIGI) provides a ligand contact to monodehydro-L-ascorbate radical. The helical transmembrane segment at 123–143 (IGIGTITLYGIQWIIGFVTFF) threads the bilayer. At 144–153 (FPGAAPNVKK) the chain is on the cytoplasmic side. The helical transmembrane segment at 154-174 (GVLPWHVLFGLFVYILALANA) threads the bilayer. Residue His159 participates in heme b binding. The Extracellular portion of the chain corresponds to 175–201 (ELGFLEKLTFLESSGLDKYGTEAFLVN). A helical membrane pass occupies residues 202–222 (FTALVVVLFGASVVVAAIAPV). The Cytoplasmic portion of the chain corresponds to 223–236 (RLEEPQGYDPIPEN).

It depends on heme b as a cofactor.

The protein resides in the membrane. Its activity is regulated as follows. Inhibited by diethylpyrocarbonate. Functionally, two-heme-containing cytochrome. Catalyzes ascorbate-dependent trans-membrane electron transfer by utilizing a concerted H(+)/e(-) transfer mechanism. The protein is Ascorbate-specific transmembrane electron transporter 1 (ZCYB) of Zea mays (Maize).